The chain runs to 427 residues: Isocitrate lyase (427 aa).

89-91 (SGW) is a binding site for substrate. Asp150 provides a ligand contact to Mg(2+). Residue Cys188 is the Proton acceptor of the active site. Substrate is bound by residues 189–190 (GH), Arg225, 310–314 (NCSPS), and Thr344.

It belongs to the isocitrate lyase/PEP mutase superfamily. Isocitrate lyase family. Homotetramer. Mg(2+) serves as cofactor.

It carries out the reaction D-threo-isocitrate = glyoxylate + succinate. Its pathway is carbohydrate metabolism; glyoxylate cycle; (S)-malate from isocitrate: step 1/2. Involved in the metabolic adaptation in response to environmental changes. Catalyzes the reversible formation of succinate and glyoxylate from isocitrate, a key step of the glyoxylate cycle, which operates as an anaplerotic route for replenishing the tricarboxylic acid cycle during growth on fatty acid substrates. The chain is Isocitrate lyase (aceA) from Halalkalibacterium halodurans (strain ATCC BAA-125 / DSM 18197 / FERM 7344 / JCM 9153 / C-125) (Bacillus halodurans).